We begin with the raw amino-acid sequence, 458 residues long: MELPFAESWKIKMVEPIHKSTREQREQWLKEAHYNVFQLTADKVYIDLLTDSGTGAMSDRQWSALMMGDESYAGASSFLKLKETITKITGFDYILPTHQGRAAENVLFSYLVKQGDIVPGNSHFDTTKGHIESRHATALDCTVDIAKDTQAEYPFKGNVDIKKLEKALEENKDKIPFIIITITNNTAGGQPVSMANLREVRELADKYKKPVLFDSARFAENAYFIKVREEGYANKTIKEICLEMFKYADGMTMSAKKDGLVNIGGFIATRLKEWYEGAKSYCIMYEGYLTYGGMAGRDMSALAAGLEENTEFEMLETRIKQVEYLAKRLDEYGIPYQRPAGGHAIFLDARKILTHVPAEEFPAQTLTVELYLEAGIRGVEIGYILADRDPVTRENRFGGLDLLRLAIPRRVYTDNHMNVVAVALKNVFDRREKITRGVKITWEAEIMRHFTVQLERLQ.

N6-(pyridoxal phosphate)lysine is present on K257.

Belongs to the beta-eliminating lyase family. The cofactor is pyridoxal 5'-phosphate.

This is Probable beta-eliminating lyase from Trichomonas vaginalis (strain ATCC PRA-98 / G3).